We begin with the raw amino-acid sequence, 87 residues long: HssA/B-like protein 28 (87 aa).

Belongs to the hssA/B family.

In Dictyostelium discoideum (Social amoeba), this protein is HssA/B-like protein 28 (hssl28).